The chain runs to 309 residues: DNA-directed RNA polymerase subunit alpha (309 aa).

The interval 1–227 (MTFQVECVES…ALFEPLKNVS (227 aa)) is alpha N-terminal domain (alpha-NTD). The tract at residues 237-309 (EPTPESQTPI…GIKLQESKVS (73 aa)) is alpha C-terminal domain (alpha-CTD).

This sequence belongs to the RNA polymerase alpha chain family. As to quaternary structure, in cyanobacteria the RNAP catalytic core is composed of 2 alpha, 1 beta, 1 beta', 1 gamma and 1 omega subunit. When a sigma factor is associated with the core the holoenzyme is formed, which can initiate transcription.

It catalyses the reaction RNA(n) + a ribonucleoside 5'-triphosphate = RNA(n+1) + diphosphate. In terms of biological role, DNA-dependent RNA polymerase catalyzes the transcription of DNA into RNA using the four ribonucleoside triphosphates as substrates. The protein is DNA-directed RNA polymerase subunit alpha of Synechococcus elongatus (strain ATCC 33912 / PCC 7942 / FACHB-805) (Anacystis nidulans R2).